We begin with the raw amino-acid sequence, 329 residues long: Beta-ketoacyl-[acyl-carrier-protein] synthase III (329 aa).

Catalysis depends on residues C114 and H254. The interval 255–259 (QANLR) is ACP-binding. N284 is a catalytic residue.

It belongs to the thiolase-like superfamily. FabH family. In terms of assembly, homodimer.

The protein resides in the cytoplasm. It carries out the reaction malonyl-[ACP] + acetyl-CoA + H(+) = 3-oxobutanoyl-[ACP] + CO2 + CoA. The protein operates within lipid metabolism; fatty acid biosynthesis. In terms of biological role, catalyzes the condensation reaction of fatty acid synthesis by the addition to an acyl acceptor of two carbons from malonyl-ACP. Catalyzes the first condensation reaction which initiates fatty acid synthesis and may therefore play a role in governing the total rate of fatty acid production. Possesses both acetoacetyl-ACP synthase and acetyl transacylase activities. Its substrate specificity determines the biosynthesis of branched-chain and/or straight-chain of fatty acids. The protein is Beta-ketoacyl-[acyl-carrier-protein] synthase III of Roseiflexus sp. (strain RS-1).